Reading from the N-terminus, the 152-residue chain is Transcriptional repressor NrdR (152 aa).

A zinc finger lies at 3-34 (CPFCSTEETKVIDSRLVSEGYQVRRRRECTNC). The ATP-cone domain occupies 49–139 (PKIVKTDGYR…VYLSFENINE (91 aa)).

It belongs to the NrdR family. Zn(2+) is required as a cofactor.

Its function is as follows. Negatively regulates transcription of bacterial ribonucleotide reductase nrd genes and operons by binding to NrdR-boxes. The protein is Transcriptional repressor NrdR of Actinobacillus succinogenes (strain ATCC 55618 / DSM 22257 / CCUG 43843 / 130Z).